Reading from the N-terminus, the 253-residue chain is Ribosome-inactivating protein saporin-5 (253 aa).

Residue Glu176 is part of the active site.

The protein belongs to the ribosome-inactivating protein family. Type 1 RIP subfamily.

It carries out the reaction Endohydrolysis of the N-glycosidic bond at one specific adenosine on the 28S rRNA.. Functionally, ribosome-inactivating protein of type 1, inhibits protein synthesis in animal cells. The polypeptide is Ribosome-inactivating protein saporin-5 (SAP5) (Saponaria officinalis (Common soapwort)).